The chain runs to 166 residues: MKYTSYILAFQLCIVLGSLGCYCQDPYVKEAENLKKYFNAGHSDVADNGTLFLGILKNWKEESDRKIMQSQIVSFYFKLFKNFKDDQSIQKSVETIKEDMNVKFFNSNKKKRDDFEKLTNYSVTDLNVQRKAIHELIQVMAELSPAAKTGKRKRSQMLFRGRRASQ.

Positions 1–23 (MKYTSYILAFQLCIVLGSLGCYC) are cleaved as a signal peptide. Residue Q24 is modified to Pyrrolidone carboxylic acid. A glycan (N-linked (GlcNAc...) asparagine) is linked at N48. The N-linked (GlcNAc...) asparagine; in dimeric form glycan is linked to N120. Residues 147–166 (AKTGKRKRSQMLFRGRRASQ) are disordered. The segment covering 149 to 166 (TGKRKRSQMLFRGRRASQ) has biased composition (basic residues). A propeptide spanning residues 162 to 166 (RRASQ) is cleaved from the precursor.

This sequence belongs to the type II (or gamma) interferon family. As to quaternary structure, homodimer. Interacts with IFNGR1 (via extracellular domain); this interaction promotes IFNGR1 dimerization. Proteolytic processing produces C-terminal heterogeneity, with proteins ending alternatively at Gly-150, Met-157 or Gly-161. Released primarily from activated T lymphocytes.

It is found in the secreted. In terms of biological role, type II interferon produced by immune cells such as T-cells and NK cells that plays crucial roles in antimicrobial, antiviral, and antitumor responses by activating effector immune cells and enhancing antigen presentation. Primarily signals through the JAK-STAT pathway after interaction with its receptor IFNGR1 to affect gene regulation. Upon IFNG binding, IFNGR1 intracellular domain opens out to allow association of downstream signaling components JAK2, JAK1 and STAT1, leading to STAT1 activation, nuclear translocation and transcription of IFNG-regulated genes. Many of the induced genes are transcription factors such as IRF1 that are able to further drive regulation of a next wave of transcription. Plays a role in class I antigen presentation pathway by inducing a replacement of catalytic proteasome subunits with immunoproteasome subunits. In turn, increases the quantity, quality, and repertoire of peptides for class I MHC loading. Increases the efficiency of peptide generation also by inducing the expression of activator PA28 that associates with the proteasome and alters its proteolytic cleavage preference. Up-regulates as well MHC II complexes on the cell surface by promoting expression of several key molecules such as cathepsins B/CTSB, H/CTSH, and L/CTSL. Participates in the regulation of hematopoietic stem cells during development and under homeostatic conditions by affecting their development, quiescence, and differentiation. This Homo sapiens (Human) protein is Interferon gamma (IFNG).